The sequence spans 310 residues: uncharacterized protein (310 aa).

The protein belongs to the YiaX1 family.

This is an uncharacterized protein from Salmonella typhimurium (strain LT2 / SGSC1412 / ATCC 700720).